A 293-amino-acid polypeptide reads, in one-letter code: Acetyl-coenzyme A carboxylase carboxyl transferase subunit beta (293 aa).

The CoA carboxyltransferase N-terminal domain occupies 29–293 (LWVKCSECSQ…GVKELAEANT (265 aa)). Positions 33, 36, 52, and 55 each coordinate Zn(2+). Residues 33-55 (CSECSQVAYRKDLISNFNVCNNC) form a C4-type zinc finger.

The protein belongs to the AccD/PCCB family. Acetyl-CoA carboxylase is a heterohexamer composed of biotin carboxyl carrier protein (AccB), biotin carboxylase (AccC) and two subunits each of ACCase subunit alpha (AccA) and ACCase subunit beta (AccD). Requires Zn(2+) as cofactor.

It localises to the cytoplasm. The enzyme catalyses N(6)-carboxybiotinyl-L-lysyl-[protein] + acetyl-CoA = N(6)-biotinyl-L-lysyl-[protein] + malonyl-CoA. Its pathway is lipid metabolism; malonyl-CoA biosynthesis; malonyl-CoA from acetyl-CoA: step 1/1. Its function is as follows. Component of the acetyl coenzyme A carboxylase (ACC) complex. Biotin carboxylase (BC) catalyzes the carboxylation of biotin on its carrier protein (BCCP) and then the CO(2) group is transferred by the transcarboxylase to acetyl-CoA to form malonyl-CoA. The protein is Acetyl-coenzyme A carboxylase carboxyl transferase subunit beta of Prochlorococcus marinus (strain AS9601).